A 461-amino-acid polypeptide reads, in one-letter code: Bifunctional protein GlmU (461 aa).

A pyrophosphorylase region spans residues 1-230; that stretch reads MECLMAVILA…SSEILGINDR (230 aa). UDP-N-acetyl-alpha-D-glucosamine contacts are provided by residues 9–12, lysine 23, glutamine 73, 78–79, 101–103, glycine 140, glutamate 155, asparagine 170, and asparagine 228; these read LAAG, GT, and YGD. Mg(2+) is bound at residue aspartate 103. Position 228 (asparagine 228) interacts with Mg(2+). The interval 231–251 is linker; that stretch reads VQLAEAGRIIRSRILKRHMKN. The tract at residues 252 to 461 is N-acetyltransferase; sequence GVTIIDPDST…KKGMLRQEKE (210 aa). UDP-N-acetyl-alpha-D-glucosamine-binding residues include arginine 333 and lysine 351. Histidine 363 serves as the catalytic Proton acceptor. UDP-N-acetyl-alpha-D-glucosamine-binding residues include tyrosine 366 and asparagine 377. Acetyl-CoA contacts are provided by residues 386–387, alanine 423, and arginine 440; that span reads NY.

It in the N-terminal section; belongs to the N-acetylglucosamine-1-phosphate uridyltransferase family. This sequence in the C-terminal section; belongs to the transferase hexapeptide repeat family. Homotrimer. The cofactor is Mg(2+).

The protein localises to the cytoplasm. It catalyses the reaction alpha-D-glucosamine 1-phosphate + acetyl-CoA = N-acetyl-alpha-D-glucosamine 1-phosphate + CoA + H(+). The enzyme catalyses N-acetyl-alpha-D-glucosamine 1-phosphate + UTP + H(+) = UDP-N-acetyl-alpha-D-glucosamine + diphosphate. It participates in nucleotide-sugar biosynthesis; UDP-N-acetyl-alpha-D-glucosamine biosynthesis; N-acetyl-alpha-D-glucosamine 1-phosphate from alpha-D-glucosamine 6-phosphate (route II): step 2/2. Its pathway is nucleotide-sugar biosynthesis; UDP-N-acetyl-alpha-D-glucosamine biosynthesis; UDP-N-acetyl-alpha-D-glucosamine from N-acetyl-alpha-D-glucosamine 1-phosphate: step 1/1. The protein operates within bacterial outer membrane biogenesis; LPS lipid A biosynthesis. Functionally, catalyzes the last two sequential reactions in the de novo biosynthetic pathway for UDP-N-acetylglucosamine (UDP-GlcNAc). The C-terminal domain catalyzes the transfer of acetyl group from acetyl coenzyme A to glucosamine-1-phosphate (GlcN-1-P) to produce N-acetylglucosamine-1-phosphate (GlcNAc-1-P), which is converted into UDP-GlcNAc by the transfer of uridine 5-monophosphate (from uridine 5-triphosphate), a reaction catalyzed by the N-terminal domain. The chain is Bifunctional protein GlmU from Acetivibrio thermocellus (strain ATCC 27405 / DSM 1237 / JCM 9322 / NBRC 103400 / NCIMB 10682 / NRRL B-4536 / VPI 7372) (Clostridium thermocellum).